The sequence spans 545 residues: E3 ubiquitin-protein ligase ipaH9.8 (545 aa).

The tract at residues 1–242 is interaction with target proteins; it reads MLPINNNFSL…YHGPRIYFSM (242 aa). 8 LRR repeats span residues 57–77, 78–99, 100–117, 118–139, 140–157, 158–179, 182–203, and 205–228; these read NSDELRLDRLNLSSLPDNLPA, QITLLNVSYNQLTNLPELPVTL, KKLYSASNKLSELPVLPP, ALESLQVQHNELENLPALPDSL, LTMNISYNEIVSLPSLPL, ALKNLRATRNFLTELPAFSEGN, VVREYFFDRNQISHIPESILNL, and NECSIHISDNPLSSHALQALQRLT. Residues 243–250 are linker; it reads SDGQQNTL. An E3 ubiquitin-protein ligase catalytic domain region spans residues 251–545; sequence HRPLADAVTA…SENGSQLHHS (295 aa). Positions 253–545 constitute an NEL domain; the sequence is PLADAVTAWF…SENGSQLHHS (293 aa). Cys337 serves as the catalytic Glycyl thioester intermediate.

The protein belongs to the LRR-containing bacterial E3 ligase family. In terms of assembly, also interacts with human and mouse U2AF1 (U2AF35). Ubiquitinated in the presence of host E1 ubiquitin-activating enzyme, E2 ubiquitin-conjugating enzyme and ubiquitin.

It localises to the secreted. It is found in the host cytoplasm. The protein localises to the host nucleus. The catalysed reaction is S-ubiquitinyl-[E2 ubiquitin-conjugating enzyme]-L-cysteine + [acceptor protein]-L-lysine = [E2 ubiquitin-conjugating enzyme]-L-cysteine + N(6)-ubiquitinyl-[acceptor protein]-L-lysine.. With respect to regulation, exists in an autoinhibited state in the absence of substrate protein, due to interactions of the leucine-rich repeats with NEL domain. Is activated upon binding to a substrate protein. Effector E3 ubiquitin ligase that interferes with host's ubiquitination pathway and modulates the acute inflammatory responses, thus facilitating bacterial colonization within the host cell. Interacts with IKBKG (NEMO) and TNIP1 (ABIN-1), a ubiquitin-binding adapter protein, which results in TNIP1-dependent 'Lys-27'-linked polyubiquitination of IKBKG. Consequently, polyubiquitinated IKBKG undergoes proteasome-dependent degradation, which perturbs NF-kappa-B activation during bacterial infection. Mediates polyubiquitination of host U2AF1, leading to its proteasomal degradation. Catalyzes 'Lys-48'-linked polyubiquitination and subsequent degradation of a subset of host guanylate-binding proteins (GBP1, GBP2, GBP4 and GBP6), thereby suppressing host cell defense. In contrast, host GBP3 and GBP7 are not ubiquitinated by IpaH9.8. Uses UBE2D2 (UBCH5B) as an E2 ubiquitin-conjugating enzyme. The polypeptide is E3 ubiquitin-protein ligase ipaH9.8 (ipaH9.8) (Shigella boydii serotype 4 (strain Sb227)).